Here is a 120-residue protein sequence, read N- to C-terminus: uncharacterized protein (120 aa).

Residues 1-19 form the signal peptide; that stretch reads MKKIVCAVVALLLTLPAWA.

This is an uncharacterized protein from Salmonella typhimurium (strain LT2 / SGSC1412 / ATCC 700720).